A 171-amino-acid polypeptide reads, in one-letter code: Co-chaperone protein HscB homolog (171 aa).

Residues 2–74 (NHFELFGLPN…VSRAEYILSE (73 aa)) form the J domain.

Belongs to the HscB family. Interacts with HscA and stimulates its ATPase activity.

Its function is as follows. Co-chaperone involved in the maturation of iron-sulfur cluster-containing proteins. Seems to help targeting proteins to be folded toward HscA. The protein is Co-chaperone protein HscB homolog of Aliivibrio fischeri (strain ATCC 700601 / ES114) (Vibrio fischeri).